A 251-amino-acid polypeptide reads, in one-letter code: Insulin-induced gene 1 protein (251 aa).

The Cytoplasmic portion of the chain corresponds to 1–58; it reads MQTLEEHCWSCSCTRGRDKKGTKVSAWLARRVGKAMSSLNSLLSLAYSTLASSEGRSL. Residues 59–81 form a helical membrane-spanning segment; the sequence is IQRSLVLFTVGVFLALVLNLLQI. Residues 82 to 100 lie on the Extracellular side of the membrane; that stretch reads QRNVTLFPEEVIATIFSSA. Residues 101 to 118 form a helical membrane-spanning segment; it reads WWVPPCCGTAAAVVGLLY. Residues 119-133 are Cytoplasmic-facing; it reads PCIDSRIGEPHKFKR. A helical membrane pass occupies residues 134–156; it reads EWASVMRCIAVFVGINHASAKLD. Residues 157-159 are Extracellular-facing; that stretch reads FAN. Residues 160–178 form a helical membrane-spanning segment; it reads NVQLSLTLAALSLGLWWTF. Residues 179 to 183 are Cytoplasmic-facing; that stretch reads DRSRS. Residues 184 to 205 form a helical membrane-spanning segment; that stretch reads GLGLGITIAFLATLITQFLVYN. Residues 206–219 are Extracellular-facing; sequence GVYQYTSPDFLYIR. Residues 220 to 237 traverse the membrane as a helical segment; it reads SWLPCIFFSGGVTVGNIG. Topologically, residues 238–251 are cytoplasmic; that stretch reads RQLAMGSSEKTHGD. Positions 245–251 match the KxHxx motif; the sequence is SEKTHGD.

This sequence belongs to the INSIG family. As to quaternary structure, interacts with scap; interaction is direct and only takes place in the presence of sterols; it prevents interaction between scap and the coat protein complex II (COPII). Associates with the SCAP-SREBP complex; association is mediated via its interaction with scap and only takes place in the presence of sterols.

Its subcellular location is the endoplasmic reticulum membrane. Functionally, oxysterol-binding protein that mediates feedback control of cholesterol synthesis by controlling both endoplasmic reticulum to Golgi transport of scap and degradation of hmgcr. Acts as a negative regulator of cholesterol biosynthesis by mediating the retention of the SCAP-SREBP complex in the endoplasmic reticulum, thereby blocking the processing of sterol regulatory element-binding proteins (SREBPs). Binds oxysterol, including 25-hydroxycholesterol, regulating interaction with scap and retention of the SCAP-SREBP complex in the endoplasmic reticulum. In presence of oxysterol, interacts with scap, retaining the SCAP-SREBP complex in the endoplasmic reticulum, thereby preventing scap from escorting SREBPs to the Golgi. Sterol deprivation reduces oxysterol-binding, disrupting the interaction between insig1 and scap, thereby promoting Golgi transport of the SCAP-SREBP complex, followed by processing and nuclear translocation of SREBPs. Also regulates cholesterol synthesis by regulating degradation of hmgcr. The polypeptide is Insulin-induced gene 1 protein (Xenopus laevis (African clawed frog)).